Consider the following 962-residue polypeptide: Vacuolar membrane protease (962 aa).

Residues 1–15 are Cytoplasmic-facing; it reads MVSSRRGFNPIAFTP. Residues 16 to 36 form a helical membrane-spanning segment; it reads WPVTILSSLVYLALIIPIIVV. At 37–390 the chain is on the vacuolar side; the sequence is HHLVPPAPKE…FQLNTLFGHS (354 aa). Residues Asn110 and Asn113 are each glycosylated (N-linked (GlcNAc...) asparagine). 2 residues coordinate Zn(2+): His169 and Asp181. The active-site Proton acceptor is Glu215. Glu216, Glu241, and His314 together coordinate Zn(2+). A helical membrane pass occupies residues 391–411; the sequence is VALLVVAPLLLIITSVALFAV. Topologically, residues 412–440 are cytoplasmic; it reads DKMYMFSMYTYISESGGQVSLYGLRGMFR. Residues 441–461 traverse the membrane as a helical segment; sequence FPLILGISTALTIALAFLIMK. Residues 462–472 are Vacuolar-facing; the sequence is VNPFIIYSSPY. A helical membrane pass occupies residues 473-493; the sequence is AVWSMMLSTCMFFAWFISCVA. The Cytoplasmic segment spans residues 494–503; sequence DFARPSALHR. Residues 504-524 traverse the membrane as a helical segment; that stretch reads AYSFSWMFGIMWVFLVIATVY. Residues 525–534 are Vacuolar-facing; that stretch reads QKQHGIASSY. A helical transmembrane segment spans residues 535–555; that stretch reads FIVFYFAGVAVATWISYLELF. Topologically, residues 556–667 are cytoplasmic; sequence GLPKTQDYAR…WSIYLMSSAW (112 aa). The tract at residues 568-617 is disordered; that stretch reads GRLSDRTPSSDSHFLAPSADELPSSSSAAGRDFNPEDVEDEEPTESTSLL. Over residues 602-611 the composition is skewed to acidic residues; the sequence is PEDVEDEEPT. Residues 668 to 688 form a helical membrane-spanning segment; it reads ILQFLLVAPIVIILLGQLGLF. The Vacuolar portion of the chain corresponds to 689 to 704; that stretch reads LTSATYQIGADGGSQL. The chain crosses the membrane as a helical span at residues 705-725; it reads VIYIGIAVLSVLILLPLFPFI. Topologically, residues 726–731 are cytoplasmic; it reads HRFTYH. Residues 732 to 752 traverse the membrane as a helical segment; it reads IPTFLLFILIGTLVYNLTAFP. At 753–962 the chain is on the vacuolar side; that stretch reads FSHSNRLKLA…LVEGSYSFKL (210 aa). N-linked (GlcNAc...) asparagine glycosylation occurs at Asn834.

It belongs to the peptidase M28 family. It depends on Zn(2+) as a cofactor.

The protein localises to the vacuole membrane. May be involved in vacuolar sorting and osmoregulation. The chain is Vacuolar membrane protease from Arthroderma benhamiae (strain ATCC MYA-4681 / CBS 112371) (Trichophyton mentagrophytes).